Reading from the N-terminus, the 393-residue chain is Succinate--CoA ligase [ADP-forming] subunit beta (393 aa).

Residues 9 to 242 (KELFAKHGVP…RAATDPLEWK (234 aa)) enclose the ATP-grasp domain. ATP is bound by residues lysine 45, 52 to 54 (GRG), serine 94, and glutamate 99. Mg(2+)-binding residues include asparagine 191 and aspartate 211. Residues asparagine 262 and 324-326 (GIT) contribute to the substrate site.

The protein belongs to the succinate/malate CoA ligase beta subunit family. As to quaternary structure, heterotetramer of two alpha and two beta subunits. Mg(2+) is required as a cofactor.

It catalyses the reaction succinate + ATP + CoA = succinyl-CoA + ADP + phosphate. It carries out the reaction GTP + succinate + CoA = succinyl-CoA + GDP + phosphate. It participates in carbohydrate metabolism; tricarboxylic acid cycle; succinate from succinyl-CoA (ligase route): step 1/1. Functionally, succinyl-CoA synthetase functions in the citric acid cycle (TCA), coupling the hydrolysis of succinyl-CoA to the synthesis of either ATP or GTP and thus represents the only step of substrate-level phosphorylation in the TCA. The beta subunit provides nucleotide specificity of the enzyme and binds the substrate succinate, while the binding sites for coenzyme A and phosphate are found in the alpha subunit. This is Succinate--CoA ligase [ADP-forming] subunit beta from Mycobacterium leprae (strain Br4923).